A 468-amino-acid polypeptide reads, in one-letter code: ATP synthase subunit beta (468 aa).

ATP is bound at residue 155 to 162 (GGAGVGKT).

This sequence belongs to the ATPase alpha/beta chains family. In terms of assembly, F-type ATPases have 2 components, CF(1) - the catalytic core - and CF(0) - the membrane proton channel. CF(1) has five subunits: alpha(3), beta(3), gamma(1), delta(1), epsilon(1). CF(0) has three main subunits: a(1), b(2) and c(9-12). The alpha and beta chains form an alternating ring which encloses part of the gamma chain. CF(1) is attached to CF(0) by a central stalk formed by the gamma and epsilon chains, while a peripheral stalk is formed by the delta and b chains.

It is found in the cell membrane. The catalysed reaction is ATP + H2O + 4 H(+)(in) = ADP + phosphate + 5 H(+)(out). Functionally, produces ATP from ADP in the presence of a proton gradient across the membrane. The catalytic sites are hosted primarily by the beta subunits. This is ATP synthase subunit beta from Streptococcus thermophilus (strain CNRZ 1066).